We begin with the raw amino-acid sequence, 380 residues long: Cytochrome b (380 aa).

The next 4 helical transmembrane spans lie at 34–54, 78–99, 114–134, and 179–199; these read FGSLLGICLATQILTGLLLAM, WLIRNLHANGASFFFICVYLHI, WNTGILLLLTLMATAFVGYVL, and FFALHFLLPFAIAGLTLIHLT. Positions 84 and 98 each coordinate heme b. Positions 183 and 197 each coordinate heme b. A ubiquinone is bound at residue H202. The next 4 membrane-spanning stretches (helical) occupy residues 227 to 247, 289 to 309, 321 to 341, and 348 to 368; these read LKDALGFMLMFLPLTTLALFS, LGGVLALAASVLILFLSPLLH, LSQLLFWTLVANLFILTWVGS, and FIIIGQLASLTYFTILLILFP.

The protein belongs to the cytochrome b family. The cytochrome bc1 complex contains 11 subunits: 3 respiratory subunits (MT-CYB, CYC1 and UQCRFS1), 2 core proteins (UQCRC1 and UQCRC2) and 6 low-molecular weight proteins (UQCRH/QCR6, UQCRB/QCR7, UQCRQ/QCR8, UQCR10/QCR9, UQCR11/QCR10 and a cleavage product of UQCRFS1). This cytochrome bc1 complex then forms a dimer. It depends on heme b as a cofactor.

It is found in the mitochondrion inner membrane. In terms of biological role, component of the ubiquinol-cytochrome c reductase complex (complex III or cytochrome b-c1 complex) that is part of the mitochondrial respiratory chain. The b-c1 complex mediates electron transfer from ubiquinol to cytochrome c. Contributes to the generation of a proton gradient across the mitochondrial membrane that is then used for ATP synthesis. This is Cytochrome b (MT-CYB) from Oceanites oceanicus (Wilson's storm petrel).